The following is a 494-amino-acid chain: Metalloprotease TIKI1 (494 aa).

A signal peptide spans 1–25; sequence MTMMTMMMVSWSAFLQICWILMVRA. Over 26-467 the chain is Extracellular; sequence NQFNPGEPSG…QEHERANHDR (442 aa). Asparagine 234 and asparagine 282 each carry an N-linked (GlcNAc...) asparagine glycan. A helical transmembrane segment spans residues 468–488; sequence TFSGSSSRTGPALSALAVCVQ. Over 489–494 the chain is Cytoplasmic; it reads MLRLLL.

Belongs to the TIKI family. Requires Mn(2+) as cofactor. Co(2+) serves as cofactor.

Its subcellular location is the cell membrane. Its function is as follows. Metalloprotease that acts as a negative regulator of the Wnt signaling pathway by mediating the cleavage of the N-terminal residues of a subset of Wnt proteins. Following cleavage, Wnt proteins become oxidized and form large disulfide-bond oligomers, leading to their inactivation. The polypeptide is Metalloprotease TIKI1 (trabd2a) (Danio rerio (Zebrafish)).